We begin with the raw amino-acid sequence, 500 residues long: Carnosic acid synthase (500 aa).

The helical transmembrane segment at 4–24 (LILLSLAFLASCVVAYSRRRP) threads the bilayer. Position 443 (Cys-443) interacts with heme.

It belongs to the cytochrome P450 family. Requires heme as cofactor. In terms of tissue distribution, expressed in leaf glandular trichomes.

The protein resides in the membrane. It catalyses the reaction 11-hydroxyferruginol + 3 reduced [NADPH--hemoprotein reductase] + 3 O2 = carnosate + 3 oxidized [NADPH--hemoprotein reductase] + 4 H2O + 4 H(+). The catalysed reaction is miltiradiene + 2 reduced [NADPH--hemoprotein reductase] + 2 O2 = miltiradien-20-al + 2 oxidized [NADPH--hemoprotein reductase] + 3 H2O + 2 H(+). The enzyme catalyses ferruginol + 3 reduced [NADPH--hemoprotein reductase] + 3 O2 = pisiferate + 3 oxidized [NADPH--hemoprotein reductase] + 4 H2O + 4 H(+). It functions in the pathway secondary metabolite biosynthesis; terpenoid biosynthesis. In terms of biological role, monooxygenase involved in the biosynthesis of carnosate, a potent antioxidant labdane-related diterpene natural product. Catalyzes the oxidation of 11-hydroxyferruginol to produce carnosate. Mediates the conversion of miltiradien into miltiradien-20-al. Also involved in the production of pisiferic acid and derivative products from ferruginol. The sequence is that of Carnosic acid synthase from Salvia pomifera (Apple sage).